The following is a 1107-amino-acid chain: RNA-dependent RNA polymerase 1 (1107 aa).

This sequence belongs to the RdRP family.

The catalysed reaction is RNA(n) + a ribonucleoside 5'-triphosphate = RNA(n+1) + diphosphate. In terms of biological role, RNA-dependent direct polymerase involved in antiviral silencing. Required for the production of some small RNAs (mainly 21 and some 22 nucleotides) derived from the crucifer-infecting tobamovirus (TMV-cg). Required for turnip mosaic virus (TuMV) silencing and accumulation of viral siRNAs. Involved in cucumber mosaic virus (CMV) silencing. Required for the biogenesis of viral secondary siRNAs, process that follows the production of primary siRNAs derived from viral RNA replication. Specifically targets the positive-strand of the 3 RNA genomes of CMV and preferentially amplifies the 5'-terminal siRNAs of each viral genomic RNA. Not involved in the production of siRNAs derived from a single-stranded 336-nucleotide satellite RNA of CMV. In Arabidopsis thaliana (Mouse-ear cress), this protein is RNA-dependent RNA polymerase 1 (RDR1).